Consider the following 359-residue polypeptide: MNKGIIDQLTRLSMRLGELDKLLSTEKITADLDNYRKLSRERAEIEPVTELYRTYQQVEQDLATAREMSSDPQFRDFAEAEIEADRRKLTNIETEILRQLLPKDPNDERNIFLEIRAGTGGDESALFAGDLFRMYSRYAEREGWQVEVVSQNPSEVGGYKEIIVRIIGHGAYSRLKFESGGHRVQRVPATETQGRVHTSTCTVAVLPEADEIADITLNPADLRIDTFRASGAGGQHINKTDSAVRITHLPTGIVAECQEGRSQHKNKAQAMSVLIARILDKQVRAQQAEQAATRKSLVGSGERSERIRTYNFPQGRITDHRINLTLYKIEQIIDGELDELCSALAAEHQAAQLAAMTEK.

Glutamine 235 carries the post-translational modification N5-methylglutamine.

It belongs to the prokaryotic/mitochondrial release factor family. In terms of processing, methylated by PrmC. Methylation increases the termination efficiency of RF1.

The protein localises to the cytoplasm. Functionally, peptide chain release factor 1 directs the termination of translation in response to the peptide chain termination codons UAG and UAA. This Nitrosomonas europaea (strain ATCC 19718 / CIP 103999 / KCTC 2705 / NBRC 14298) protein is Peptide chain release factor 1.